The chain runs to 337 residues: MQIVEQMKDKALAELNLVKDKKTLDDIRVKYLGKKGELTEMMKLIATLPNDEKPKLGQAVNIAKQALQEAINLKLANFEEQELNEKLAQEKIDITLSGVGQNQGSLHPVTKTLNRIEAFFKQNGFAIEFGPEIESDYYNFETLNIPSHHPARAMHDTFYIDETHVLRTHTSGVQIRTMEKQQPPIRIIAPGRVYRCDSDITHTPMFHQVEGLLVDKDVSFADLKGLLHAFLNSFFEKDLKVRFRPSYFPFTEPSAEADIECVMCDGKGCRVCKHTGWLEVLGCGMVHPKVLKAGNVDPEKYQGFAFGMGVERLSMLRYGIDDLRMFFENDLRFLKQF.

Glutamate 252 serves as a coordination point for Mg(2+).

Belongs to the class-II aminoacyl-tRNA synthetase family. Phe-tRNA synthetase alpha subunit type 1 subfamily. Tetramer of two alpha and two beta subunits. Requires Mg(2+) as cofactor.

Its subcellular location is the cytoplasm. The enzyme catalyses tRNA(Phe) + L-phenylalanine + ATP = L-phenylalanyl-tRNA(Phe) + AMP + diphosphate + H(+). This is Phenylalanine--tRNA ligase alpha subunit from Francisella tularensis subsp. novicida (strain U112).